Here is a 244-residue protein sequence, read N- to C-terminus: Ubiquinone/menaquinone biosynthesis C-methyltransferase UbiE (244 aa).

S-adenosyl-L-methionine-binding positions include Thr70, Asp91, and 117–118; that span reads DA.

Belongs to the class I-like SAM-binding methyltransferase superfamily. MenG/UbiE family.

It carries out the reaction a 2-demethylmenaquinol + S-adenosyl-L-methionine = a menaquinol + S-adenosyl-L-homocysteine + H(+). The catalysed reaction is a 2-methoxy-6-(all-trans-polyprenyl)benzene-1,4-diol + S-adenosyl-L-methionine = a 5-methoxy-2-methyl-3-(all-trans-polyprenyl)benzene-1,4-diol + S-adenosyl-L-homocysteine + H(+). It functions in the pathway quinol/quinone metabolism; menaquinone biosynthesis; menaquinol from 1,4-dihydroxy-2-naphthoate: step 2/2. The protein operates within cofactor biosynthesis; ubiquinone biosynthesis. In terms of biological role, methyltransferase required for the conversion of demethylmenaquinol (DMKH2) to menaquinol (MKH2) and the conversion of 2-polyprenyl-6-methoxy-1,4-benzoquinol (DDMQH2) to 2-polyprenyl-3-methyl-6-methoxy-1,4-benzoquinol (DMQH2). The sequence is that of Ubiquinone/menaquinone biosynthesis C-methyltransferase UbiE from Nitrosospira multiformis (strain ATCC 25196 / NCIMB 11849 / C 71).